Here is an 872-residue protein sequence, read N- to C-terminus: Exoglucanase A (872 aa).

A signal peptide spans 1 to 40; the sequence is MSTLGKRAGVRRRVRAVATAATATALVAVPLTTLATSASA. The segment at 41-477 is catalytic; that stretch reads APVHVDNPYA…PVIGGTTPVE (437 aa). 2 disulfide bridges follow: cysteine 140/cysteine 202 and cysteine 374/cysteine 428. Catalysis depends on aspartate 188, which acts as the Proton donor. The Nucleophile role is filled by aspartate 410. Fibronectin type-III domains lie at 484 to 569, 579 to 667, and 677 to 765; these read VPTG…TQSG, VPAG…TQTG, and VPTG…TQAA. The region spanning 763-872 is the CBM2 domain; that stretch reads QAATSGGCTV…TLNGVACTLG (110 aa). Residues cysteine 770 and cysteine 869 are joined by a disulfide bond.

Belongs to the glycosyl hydrolase 6 (cellulase B) family.

The catalysed reaction is Hydrolysis of (1-&gt;4)-beta-D-glucosidic linkages in cellulose and cellotetraose, releasing cellobiose from the non-reducing ends of the chains.. Functionally, this enzyme hydrolyzes 1,4-beta-D-glucosidic linkages of cellulose. Weak activity against carboxymethylcellulose, bacterial microcrystalline cellulose and barley beta-glucan. Also has weak endoglucanase activity. Hydrolyzes glucosidic bonds with inversion of anomeric configuration. This chain is Exoglucanase A (cbhA), found in Cellulomonas fimi (strain ATCC 484 / DSM 20113 / JCM 1341 / CCUG 24087 / LMG 16345 / NBRC 15513 / NCIMB 8980 / NCTC 7547 / NRS-133).